The primary structure comprises 416 residues: Gamma-glutamyl phosphate reductase (416 aa).

It belongs to the gamma-glutamyl phosphate reductase family.

It is found in the cytoplasm. It carries out the reaction L-glutamate 5-semialdehyde + phosphate + NADP(+) = L-glutamyl 5-phosphate + NADPH + H(+). It participates in amino-acid biosynthesis; L-proline biosynthesis; L-glutamate 5-semialdehyde from L-glutamate: step 2/2. Catalyzes the NADPH-dependent reduction of L-glutamate 5-phosphate into L-glutamate 5-semialdehyde and phosphate. The product spontaneously undergoes cyclization to form 1-pyrroline-5-carboxylate. The polypeptide is Gamma-glutamyl phosphate reductase (Leptospira interrogans serogroup Icterohaemorrhagiae serovar Lai (strain 56601)).